A 303-amino-acid polypeptide reads, in one-letter code: NAC domain-containing protein 48 (303 aa).

In terms of domain architecture, NAC spans 9–159 (LPPGFRFHPT…DWVLCRIYNK (151 aa)).

As to quaternary structure, interacts with NAC071. In terms of tissue distribution, widely expressed.

Its subcellular location is the nucleus. Functionally, transcription activator that binds to the promoter of the stress response gene LEA19. Involved in tolerance to abiotic stresses. Transcription activator involved in response to abiotic and biotic stresses. Involved in drought and salt stress responses, and defense response to the rice blast fungus. Transcription activator involved tolerance to cold and salt stresses. Transcription activator involved in tolerance to drought stress. Targets directly and activates genes involved in membrane modification, nicotianamine (NA) biosynthesis, glutathione relocation, accumulation of phosphoadenosine phosphosulfate and glycosylation in roots. Controls root growth at early vegetative stage through chromatin modification and histone lysine deacytaltion by HDAC1. The protein is NAC domain-containing protein 48 of Oryza sativa subsp. japonica (Rice).